The chain runs to 131 residues: Profilin (131 aa).

Belongs to the profilin family. As to quaternary structure, occurs in many kinds of cells as a complex with monomeric actin in a 1:1 ratio.

Its subcellular location is the cytoplasm. The protein resides in the cytoskeleton. Functionally, binds to actin and affects the structure of the cytoskeleton. At high concentrations, profilin prevents the polymerization of actin, whereas it enhances it at low concentrations. By binding to PIP2, it inhibits the formation of IP3 and DG. The sequence is that of Profilin from Arachis hypogaea (Peanut).